The sequence spans 426 residues: Serine--tRNA ligase (426 aa).

Residues K36 to E66 are disordered. Residues D46–S55 show a composition bias toward polar residues. T233–E235 is an L-serine binding site. Residue R264–E266 participates in ATP binding. E287 provides a ligand contact to L-serine. E351–S354 serves as a coordination point for ATP. S387 lines the L-serine pocket.

It belongs to the class-II aminoacyl-tRNA synthetase family. Type-1 seryl-tRNA synthetase subfamily. In terms of assembly, homodimer. The tRNA molecule binds across the dimer.

The protein resides in the cytoplasm. The catalysed reaction is tRNA(Ser) + L-serine + ATP = L-seryl-tRNA(Ser) + AMP + diphosphate + H(+). It carries out the reaction tRNA(Sec) + L-serine + ATP = L-seryl-tRNA(Sec) + AMP + diphosphate + H(+). It participates in aminoacyl-tRNA biosynthesis; selenocysteinyl-tRNA(Sec) biosynthesis; L-seryl-tRNA(Sec) from L-serine and tRNA(Sec): step 1/1. Functionally, catalyzes the attachment of serine to tRNA(Ser). Is also able to aminoacylate tRNA(Sec) with serine, to form the misacylated tRNA L-seryl-tRNA(Sec), which will be further converted into selenocysteinyl-tRNA(Sec). The protein is Serine--tRNA ligase of Francisella tularensis subsp. novicida (strain U112).